Reading from the N-terminus, the 204-residue chain is MTAGVSPDDYSIEPELLLRAYATGIFPMAEEADDPEVFWVRPERRGVIPLDGFHMPKSLQKTIRQGIFDIKLDNDFDGVIEGCASGTGERARTWINGPIREAYKNLFEIGHCHTVEAWHDGQLVGGLYGVTLGRAFFGESMFTRKRDASKVCLAYLVQHLVKQGFVLLDTQFTTPHLERFGAVEVPRKKYEKLLENALDGIVRF.

It belongs to the L/F-transferase family.

The protein resides in the cytoplasm. The catalysed reaction is N-terminal L-lysyl-[protein] + L-leucyl-tRNA(Leu) = N-terminal L-leucyl-L-lysyl-[protein] + tRNA(Leu) + H(+). It carries out the reaction N-terminal L-arginyl-[protein] + L-leucyl-tRNA(Leu) = N-terminal L-leucyl-L-arginyl-[protein] + tRNA(Leu) + H(+). It catalyses the reaction L-phenylalanyl-tRNA(Phe) + an N-terminal L-alpha-aminoacyl-[protein] = an N-terminal L-phenylalanyl-L-alpha-aminoacyl-[protein] + tRNA(Phe). Its function is as follows. Functions in the N-end rule pathway of protein degradation where it conjugates Leu, Phe and, less efficiently, Met from aminoacyl-tRNAs to the N-termini of proteins containing an N-terminal arginine or lysine. The polypeptide is Leucyl/phenylalanyl-tRNA--protein transferase (Brucella anthropi (strain ATCC 49188 / DSM 6882 / CCUG 24695 / JCM 21032 / LMG 3331 / NBRC 15819 / NCTC 12168 / Alc 37) (Ochrobactrum anthropi)).